We begin with the raw amino-acid sequence, 366 residues long: Spore germination protein GerM (366 aa).

2 disordered regions span residues 42–72 (TFVN…KADQ) and 346–366 (EKGE…TGSF). A compositionally biased stretch (basic and acidic residues) spans 58–69 (KKTESEKSDTAK). Positions 357–366 (RPSQVNTGSF) are enriched in polar residues.

Functionally, unknown. Affects both sporulation and germination. This Bacillus subtilis (strain 168) protein is Spore germination protein GerM (gerM).